A 300-amino-acid polypeptide reads, in one-letter code: Solute carrier family 25 member 35 (300 aa).

Solcar repeat units lie at residues M1–G90, H100–L193, and Q203–L294. 6 helical membrane-spanning segments follow: residues T38–G58, L59–I79, G91–L119, A169–T190, W205–P225, and L277–K300.

It belongs to the mitochondrial carrier (TC 2.A.29) family.

It localises to the mitochondrion inner membrane. It carries out the reaction a dicarboxylate(in) + sulfate(out) = a dicarboxylate(out) + sulfate(in). Functionally, putative antiporter that exchanges dicarboxylates and sulfur oxoanions across the inner membrane of mitochondria. The polypeptide is Solute carrier family 25 member 35 (SLC25A35) (Homo sapiens (Human)).